A 485-amino-acid chain; its full sequence is Glutamyl-tRNA(Gln) amidotransferase subunit A (485 aa).

Residues lysine 79 and serine 154 each act as charge relay system in the active site. Serine 178 acts as the Acyl-ester intermediate in catalysis.

This sequence belongs to the amidase family. GatA subfamily. Heterotrimer of A, B and C subunits.

It catalyses the reaction L-glutamyl-tRNA(Gln) + L-glutamine + ATP + H2O = L-glutaminyl-tRNA(Gln) + L-glutamate + ADP + phosphate + H(+). Allows the formation of correctly charged Gln-tRNA(Gln) through the transamidation of misacylated Glu-tRNA(Gln) in organisms which lack glutaminyl-tRNA synthetase. The reaction takes place in the presence of glutamine and ATP through an activated gamma-phospho-Glu-tRNA(Gln). This is Glutamyl-tRNA(Gln) amidotransferase subunit A from Geobacillus stearothermophilus (Bacillus stearothermophilus).